The chain runs to 274 residues: Tryptophan synthase alpha chain (274 aa).

Residues glutamate 49 and aspartate 60 each act as proton acceptor in the active site.

The protein belongs to the TrpA family. In terms of assembly, tetramer of two alpha and two beta chains.

The catalysed reaction is (1S,2R)-1-C-(indol-3-yl)glycerol 3-phosphate + L-serine = D-glyceraldehyde 3-phosphate + L-tryptophan + H2O. The protein operates within amino-acid biosynthesis; L-tryptophan biosynthesis; L-tryptophan from chorismate: step 5/5. The alpha subunit is responsible for the aldol cleavage of indoleglycerol phosphate to indole and glyceraldehyde 3-phosphate. The sequence is that of Tryptophan synthase alpha chain from Zymomonas mobilis subsp. mobilis (strain ATCC 31821 / ZM4 / CP4).